The chain runs to 308 residues: SAP30-binding protein (308 aa).

A disordered region spans residues 15–101 (AEYSDPESDG…EAEKRDPQEL (87 aa)). A phosphoserine mark is found at S18, S22, S43, and S52. The segment covering 57-78 (DEDGYEEEEDENSKQSEDDDSE) has biased composition (acidic residues). Basic and acidic residues predominate over residues 79–99 (TEKPEADDPKDNTEAEKRDPQ). K95 is covalently cross-linked (Glycyl lysine isopeptide (Lys-Gly) (interchain with G-Cter in SUMO2)). S113 bears the Phosphoserine mark. Glycyl lysine isopeptide (Lys-Gly) (interchain with G-Cter in SUMO2) cross-links involve residues K220, K304, and K305.

The protein belongs to the HCNGP family. In terms of assembly, interacts with histone deacetylase complex subunit SAP30.

It localises to the nucleus. In terms of biological role, plays a role in transcriptional repression by promoting histone deacetylase activity, leading to deacetylation of histone H3. May be involved in the regulation of beta-2-microglobulin genes. The protein is SAP30-binding protein (Sap30bp) of Mus musculus (Mouse).